The sequence spans 2273 residues: Acetyl-CoA carboxylase, mitochondrial (2273 aa).

Residues Lys-1 to Leu-104 constitute a mitochondrion transit peptide. Positions Val-134–Leu-635 constitute a Biotin carboxylation domain. Residues Lys-292–Met-484 enclose the ATP-grasp domain. Gly-332–Gly-337 provides a ligand contact to ATP. Arg-459 is an active-site residue. The region spanning Leu-763–Thr-837 is the Biotinyl-binding domain. Lys-804 carries the N6-biotinyllysine modification. Positions Pro-1532–Glu-1867 constitute a CoA carboxyltransferase N-terminal domain. A carboxyltransferase region spans residues Pro-1532–Lys-2187. CoA-binding residues include Arg-1776, Lys-2080, and Arg-2082. The CoA carboxyltransferase C-terminal domain occupies Arg-1871–Lys-2187.

Biotin is required as a cofactor.

The protein resides in the mitochondrion. The enzyme catalyses hydrogencarbonate + acetyl-CoA + ATP = malonyl-CoA + ADP + phosphate + H(+). The catalysed reaction is N(6)-biotinyl-L-lysyl-[protein] + hydrogencarbonate + ATP = N(6)-carboxybiotinyl-L-lysyl-[protein] + ADP + phosphate + H(+). It participates in lipid metabolism; malonyl-CoA biosynthesis; malonyl-CoA from acetyl-CoA: step 1/1. Its function is as follows. Catalyzes the rate-limiting reaction in the mitochondrial fatty acid synthesis (FAS) type II pathway. Responsible for the production of the mitochondrial malonyl-CoA, used for the biosynthesis of the cofactor lipoic acid. This protein carries three functions: biotin carboxyl carrier protein, biotin carboxylase, and carboxyltransferase. This is Acetyl-CoA carboxylase, mitochondrial (HFA1) from Saccharomyces cerevisiae (strain YJM789) (Baker's yeast).